The following is a 408-amino-acid chain: MDLAGLLLDEEGTFSLSGFQDFTFLPGHQKLSARIRRRLYYGWDLETDCSLEELSSPVADITVELLQKAAPSPIRRLQKKYVAHVSREACISPCAMMLALVYIERLRHRNPDYLQHVSSSDLFLISMMVASKYLYDEGEEEEVFNDEWGAAGGVAVPTLNALERSFLSAMDWRLYTDPREIFEVLSWLESCVAEQQGRRRGWYTYTDLCVLLEQPMWQLSLGSLCQRLVKLSCLLAVAYVSSVALAVASMAVIHQSLGLSSSPSPSPPELTLVPKNLLQPCIPAPVPQCLTNVSSCLEDSVELPSLWGSLLDPLTPPLMPPPDPPAPPTPFHKCPFCQKFQRNPPNCRACHQPNRTVSIGPIHPFYHTHGLAPPWLWSPVAPPFLQPQQCSLFSVMKLARLTSVIFPG.

The helical transmembrane segment at Cys-233–Ile-253 threads the bilayer.

This sequence belongs to the CNPPD1 family.

The protein resides in the membrane. The protein is Protein CNPPD1 (Cnppd1) of Rattus norvegicus (Rat).